Here is a 159-residue protein sequence, read N- to C-terminus: FCS-Like Zinc finger 2 (159 aa).

The FLZ-type zinc finger occupies 75 to 119 (HFLDSCFLCKKRLGDNRDIFMYRGDTPFCSEECREEQIERDEAKE). Positions 113 to 122 (ERDEAKEKKQ) are enriched in basic and acidic residues. The tract at residues 113–159 (ERDEAKEKKQSLSTSVKAMRRNEKRSSSSSPTRSRNYAFRTGTVAAA) is disordered.

The protein belongs to the FLZ family. As to quaternary structure, interacts with KIN10 and KIN11 via its FLZ-type zinc finger domain. Interacts with KINB1, KINB2, KINB3 and SNF4 via its N-terminal part. Forms heterodimer with FLZ7, FLZ10, FLZ11, FLZ12, FLZ15, FLZ17 and FLZ18 in vitro.

In terms of biological role, may act as an adapter to facilitate the interaction of SnRK1 complex with effector proteins, conferring tissue- and stimulus-type specific differences in the SnRK1 regulation pathway. The polypeptide is FCS-Like Zinc finger 2 (Arabidopsis thaliana (Mouse-ear cress)).